The following is a 263-amino-acid chain: 3-methyl-2-oxobutanoate hydroxymethyltransferase 2 (263 aa).

The Mg(2+) site is built by Asp45 and Asp84. Residues 45–46, Asp84, and Lys112 contribute to the 3-methyl-2-oxobutanoate site; that span reads DS. Position 114 (Glu114) interacts with Mg(2+). Glu181 acts as the Proton acceptor in catalysis.

This sequence belongs to the PanB family. As to quaternary structure, homodecamer; pentamer of dimers. Requires Mg(2+) as cofactor.

The protein localises to the cytoplasm. It carries out the reaction 3-methyl-2-oxobutanoate + (6R)-5,10-methylene-5,6,7,8-tetrahydrofolate + H2O = 2-dehydropantoate + (6S)-5,6,7,8-tetrahydrofolate. It functions in the pathway cofactor biosynthesis; (R)-pantothenate biosynthesis; (R)-pantoate from 3-methyl-2-oxobutanoate: step 1/2. Its function is as follows. Catalyzes the reversible reaction in which hydroxymethyl group from 5,10-methylenetetrahydrofolate is transferred onto alpha-ketoisovalerate to form ketopantoate. In Aliivibrio fischeri (strain ATCC 700601 / ES114) (Vibrio fischeri), this protein is 3-methyl-2-oxobutanoate hydroxymethyltransferase 2.